The following is a 341-amino-acid chain: Holliday junction branch migration complex subunit RuvB (341 aa).

Residues 1–182 are large ATPase domain (RuvB-L); sequence MTERFVTPDF…FGVICRLEFY (182 aa). ATP is bound by residues L21, R22, G63, K66, T67, T68, 129–131, R172, Y182, and R219; that span reads EDY. Residue T67 coordinates Mg(2+). Positions 183 to 253 are small ATPAse domain (RuvB-S); sequence TDDELATIAG…IADMALSRLE (71 aa). The interval 256-341 is head domain (RuvB-H); sequence NCGLDHMDRL…RGKTSGELFS (86 aa). Positions 311 and 316 each coordinate DNA.

It belongs to the RuvB family. In terms of assembly, homohexamer. Forms an RuvA(8)-RuvB(12)-Holliday junction (HJ) complex. HJ DNA is sandwiched between 2 RuvA tetramers; dsDNA enters through RuvA and exits via RuvB. An RuvB hexamer assembles on each DNA strand where it exits the tetramer. Each RuvB hexamer is contacted by two RuvA subunits (via domain III) on 2 adjacent RuvB subunits; this complex drives branch migration. In the full resolvosome a probable DNA-RuvA(4)-RuvB(12)-RuvC(2) complex forms which resolves the HJ.

Its subcellular location is the cytoplasm. The catalysed reaction is ATP + H2O = ADP + phosphate + H(+). Its function is as follows. The RuvA-RuvB-RuvC complex processes Holliday junction (HJ) DNA during genetic recombination and DNA repair, while the RuvA-RuvB complex plays an important role in the rescue of blocked DNA replication forks via replication fork reversal (RFR). RuvA specifically binds to HJ cruciform DNA, conferring on it an open structure. The RuvB hexamer acts as an ATP-dependent pump, pulling dsDNA into and through the RuvAB complex. RuvB forms 2 homohexamers on either side of HJ DNA bound by 1 or 2 RuvA tetramers; 4 subunits per hexamer contact DNA at a time. Coordinated motions by a converter formed by DNA-disengaged RuvB subunits stimulates ATP hydrolysis and nucleotide exchange. Immobilization of the converter enables RuvB to convert the ATP-contained energy into a lever motion, pulling 2 nucleotides of DNA out of the RuvA tetramer per ATP hydrolyzed, thus driving DNA branch migration. The RuvB motors rotate together with the DNA substrate, which together with the progressing nucleotide cycle form the mechanistic basis for DNA recombination by continuous HJ branch migration. Branch migration allows RuvC to scan DNA until it finds its consensus sequence, where it cleaves and resolves cruciform DNA. This is Holliday junction branch migration complex subunit RuvB from Syntrophotalea carbinolica (strain DSM 2380 / NBRC 103641 / GraBd1) (Pelobacter carbinolicus).